The chain runs to 860 residues: Leucine--tRNA ligase (860 aa).

The short motif at 42–52 (PYPSGRLHMGH) is the 'HIGH' region element. The 'KMSKS' region signature appears at 619–623 (KMSKS). An ATP-binding site is contributed by Lys-622.

The protein belongs to the class-I aminoacyl-tRNA synthetase family.

The protein resides in the cytoplasm. It catalyses the reaction tRNA(Leu) + L-leucine + ATP = L-leucyl-tRNA(Leu) + AMP + diphosphate. The sequence is that of Leucine--tRNA ligase from Histophilus somni (strain 129Pt) (Haemophilus somnus).